The chain runs to 1256 residues: Bifunctional autolysin (1256 aa).

An N-terminal signal peptide occupies residues 1-29 (MAKKFNYKLPSMVALTLVGSAVTAHQVQA). Positions 103–138 (GDTRANQSATTNNTQPVAKSTSTTAPKTNTNVTNAG) are enriched in polar residues. 3 disordered regions span residues 103–151 (GDTR…NSEN), 172–214 (KTAA…KTSL), and 419–440 (TQSTTTPTTPSKPTTPSKPSTG). Composition is skewed to low complexity over residues 172–196 (KTAAPKAATTSAPKAKTEATPKVTT) and 421–439 (STTTPTTPSKPTTPSKPST). The tract at residues 199–775 (ASAQPRSVAA…AVAQPKTAVK (577 aa)) is N-acetylmuramoyl-L-alanine amidase. GW domains are found at residues 443-517 (TVAA…YNTA), 519-593 (SPVN…DTAK), 612-686 (TVSS…YNNA), 688-762 (SPVN…VPAA), 784-859 (TTQT…VQNL), 861-936 (KEVK…APTA), and 943-1017 (AAKD…KELI). An endo-beta-N-acetylglucosaminidase region spans residues 776-1256 (AYTVTKPQTT…GKYFDIPQYK (481 aa)).

It in the N-terminal section; belongs to the N-acetylmuramoyl-L-alanine amidase 2 family. This sequence in the C-terminal section; belongs to the glycosyl hydrolase 73 family. Oligomer; forms a ring structure at the cell surface which is important for efficient partitioning of daughter cells after cell division. Undergoes proteolytic processing to generate the two extracellular lytic enzymes, probably at the septal region on the cell surface.

It is found in the secreted. It carries out the reaction Hydrolyzes the link between N-acetylmuramoyl residues and L-amino acid residues in certain cell-wall glycopeptides.. The enzyme catalyses an N(4)-(oligosaccharide-(1-&gt;3)-[oligosaccharide-(1-&gt;6)]-beta-D-Man-(1-&gt;4)-beta-D-GlcNAc-(1-&gt;4)-alpha-D-GlcNAc)-L-asparaginyl-[protein] + H2O = an oligosaccharide-(1-&gt;3)-[oligosaccharide-(1-&gt;6)]-beta-D-Man-(1-&gt;4)-D-GlcNAc + N(4)-(N-acetyl-beta-D-glucosaminyl)-L-asparaginyl-[protein]. In terms of biological role, endohydrolysis of the di-N-acetylchitobiosyl unit in high-mannose glycopeptides and glycoproteins containing the -[(Man)5(GlcNAc)2]-Asn structure. One N-acetyl-D-glucosamine residue remains attached to the protein; the rest of the oligosaccharide is released intact. Cleaves the peptidoglycan connecting the daughter cells at the end of the cell division cycle, resulting in the separation of the two newly divided cells. Acts as an autolysin in penicillin-induced lysis. In Staphylococcus aureus (strain NCTC 8325 / PS 47), this protein is Bifunctional autolysin (atl).